Consider the following 542-residue polypeptide: CTP synthase (542 aa).

The interval Met1 to Ile265 is amidoligase domain. CTP is bound at residue Ser13. UTP is bound at residue Ser13. Residue Ser14 to Ile19 participates in ATP binding. An L-glutamine-binding site is contributed by Tyr54. Asp71 contacts ATP. Residues Asp71 and Glu139 each coordinate Mg(2+). CTP contacts are provided by residues Asp146–Glu148, Lys186–Gln191, and Lys222. Residues Lys186–Gln191 and Lys222 each bind UTP. Positions Thr291–Leu541 constitute a Glutamine amidotransferase type-1 domain. L-glutamine is bound at residue Gly353. The active-site Nucleophile; for glutamine hydrolysis is Cys380. L-glutamine-binding positions include Phe381–Gln384, Glu404, and Arg469. Residues His514 and Glu516 contribute to the active site.

The protein belongs to the CTP synthase family. Homotetramer.

The enzyme catalyses UTP + L-glutamine + ATP + H2O = CTP + L-glutamate + ADP + phosphate + 2 H(+). It carries out the reaction L-glutamine + H2O = L-glutamate + NH4(+). It catalyses the reaction UTP + NH4(+) + ATP = CTP + ADP + phosphate + 2 H(+). Its pathway is pyrimidine metabolism; CTP biosynthesis via de novo pathway; CTP from UDP: step 2/2. Allosterically activated by GTP, when glutamine is the substrate; GTP has no effect on the reaction when ammonia is the substrate. The allosteric effector GTP functions by stabilizing the protein conformation that binds the tetrahedral intermediate(s) formed during glutamine hydrolysis. Inhibited by the product CTP, via allosteric rather than competitive inhibition. Its function is as follows. Catalyzes the ATP-dependent amination of UTP to CTP with either L-glutamine or ammonia as the source of nitrogen. Regulates intracellular CTP levels through interactions with the four ribonucleotide triphosphates. This Brucella melitensis biotype 2 (strain ATCC 23457) protein is CTP synthase.